Here is a 243-residue protein sequence, read N- to C-terminus: LexA repressor (243 aa).

The interval 1–30 is disordered; that stretch reads MSDDTGEFTDGSTESPADADGAGRRRAVDN. Residues 21-30 are compositionally biased toward basic and acidic residues; it reads GAGRRRAVDN. A DNA-binding region (H-T-H motif) is located at residues 56–76; that stretch reads IREIGDAVGLTSTSSVAHQLR. Active-site for autocatalytic cleavage activity residues include Ser167 and Lys204.

It belongs to the peptidase S24 family. Homodimer.

The enzyme catalyses Hydrolysis of Ala-|-Gly bond in repressor LexA.. Functionally, represses a number of genes involved in the response to DNA damage (SOS response), including recA and lexA. In the presence of single-stranded DNA, RecA interacts with LexA causing an autocatalytic cleavage which disrupts the DNA-binding part of LexA, leading to derepression of the SOS regulon and eventually DNA repair. The protein is LexA repressor of Mycolicibacterium smegmatis (strain ATCC 700084 / mc(2)155) (Mycobacterium smegmatis).